The sequence spans 427 residues: Rhodocoxin reductase (427 aa).

FAD is bound at residue 2-34; sequence SIVIIGSGQAGFEAAVSLRSHGFSGTITLVGDE. 144 to 172 lines the NAD(+) pocket; sequence SLVVIGAGFIGLEVAAAARKKGLDVTVVE.

It belongs to the FAD-dependent oxidoreductase family. FAD is required as a cofactor.

In terms of biological role, the degradation of the thiocarbamate herbicide EPTC by cytochrome CYP116 (thcB) requires the participation of a flavoprotein, rhodocoxin reductase, and an iron-sulfur protein, rhodocoxin, to mediate the transfer of electrons from NADH to P450 for oxygen activation. The polypeptide is Rhodocoxin reductase (thcD) (Rhodococcus erythropolis (Arthrobacter picolinophilus)).